The sequence spans 393 residues: Sister chromatid cohesion protein DCC1 (393 aa).

This sequence belongs to the DCC1 family. In terms of assembly, component of the CTF18-RFC complex which consists of CTF8, CTF18, DSCC1 and the RFC complex. Interacts with CTF8 and CTF18. Interacts with DDX11.

Its subcellular location is the nucleus. Loads PCNA onto primed templates regulating velocity, spacing and restart activity of replication forks. May couple DNA replication to sister chromatid cohesion through regulation of the acetylation of the cohesin subunit SMC3. The chain is Sister chromatid cohesion protein DCC1 (DSCC1) from Homo sapiens (Human).